Reading from the N-terminus, the 63-residue chain is MSKRCAITGKGPMVGNNVSHANNKTKRRFLPNLRTIRVTLEDGTTRRIKVAASTLRTMKKQSN.

Residues 1 to 20 (MSKRCAITGKGPMVGNNVSH) are disordered.

Belongs to the bacterial ribosomal protein bL28 family.

The polypeptide is Large ribosomal subunit protein bL28 (Campylobacter concisus (strain 13826)).